The chain runs to 681 residues: Protein hook (681 aa).

Positions 6 to 123 (NEMYYSLLEW…RLLQLVLGCA (118 aa)) constitute a Calponin-homology (CH) domain. Coiled coils occupy residues 135 to 439 (EIMS…LKCG) and 482 to 584 (QTAL…KYRK).

The protein belongs to the hook family. Homodimer. Interacts with microtubules via its N-terminus.

The protein resides in the cytoplasm. The protein localises to the cytoskeleton. Its subcellular location is the endosome. It localises to the synapse. Its function is as follows. Involved in endocytic trafficking by stabilizing organelles of the endocytic pathway. Probably acts as a cytoskeletal linker protein required to tether endosome vesicles to the cytoskeleton. Involved in modulation of endocytosis at stages required for down-regulation of membrane proteins that control synapse size. Not involved in synaptic vesicle recycling. Required in R7 cells for boss endocytosis into multivesicular bodies (MVBs). Has a role in regulating adult longevity. The chain is Protein hook from Drosophila ananassae (Fruit fly).